A 238-amino-acid chain; its full sequence is Flagellar L-ring protein (238 aa).

An N-terminal signal peptide occupies residues 1-16; sequence MNKAILAVAMVLLLAG. Residue C17 is the site of N-palmitoyl cysteine attachment. Residue C17 is the site of S-diacylglycerol cysteine attachment.

The protein belongs to the FlgH family. As to quaternary structure, the basal body constitutes a major portion of the flagellar organelle and consists of four rings (L,P,S, and M) mounted on a central rod.

It is found in the cell outer membrane. Its subcellular location is the bacterial flagellum basal body. Assembles around the rod to form the L-ring and probably protects the motor/basal body from shearing forces during rotation. The protein is Flagellar L-ring protein of Brucella melitensis biotype 2 (strain ATCC 23457).